The following is a 238-amino-acid chain: MSMAISIRSSTRPVEVRRLGTVEYLDAWELQRGLVDARVAGGSDALLLLQHPSVYTAGKRTEPHERPADGTPVVDTDRGGKITWHGPGQLVGYPIVGLAEPLDVVNFVRRIEEALIAVCTGLGLDAGRVEGRSGVWLPGDGLRPERKIGAIGIRVSRGTTLHGFALNCDCDLSAFSAIVPCGIADAGVTSLTAELGRRVTVDEVTDAVAARVCDALDGRLAVSGVSVDTYASGVASTQ.

The region spanning 40–220 is the BPL/LPL catalytic domain; sequence AGGSDALLLL…RVCDALDGRL (181 aa). Substrate is bound by residues 78 to 85, 150 to 152, and 163 to 165; these read RGGKITWH, AIG, and GFA. C181 functions as the Acyl-thioester intermediate in the catalytic mechanism.

Belongs to the LipB family.

It is found in the cytoplasm. It catalyses the reaction octanoyl-[ACP] + L-lysyl-[protein] = N(6)-octanoyl-L-lysyl-[protein] + holo-[ACP] + H(+). The protein operates within protein modification; protein lipoylation via endogenous pathway; protein N(6)-(lipoyl)lysine from octanoyl-[acyl-carrier-protein]: step 1/2. Functionally, catalyzes the transfer of endogenously produced octanoic acid from octanoyl-acyl-carrier-protein onto the lipoyl domains of lipoate-dependent enzymes. Lipoyl-ACP can also act as a substrate although octanoyl-ACP is likely to be the physiological substrate. The protein is Octanoyltransferase of Mycobacterium sp. (strain JLS).